The chain runs to 259 residues: Sugar fermentation stimulation protein homolog (259 aa).

The protein belongs to the SfsA family.

This chain is Sugar fermentation stimulation protein homolog, found in Prochlorococcus marinus (strain MIT 9303).